The sequence spans 177 residues: Large ribosomal subunit protein uL10 (177 aa).

This sequence belongs to the universal ribosomal protein uL10 family. Part of the ribosomal stalk of the 50S ribosomal subunit. The N-terminus interacts with L11 and the large rRNA to form the base of the stalk. The C-terminus forms an elongated spine to which L12 dimers bind in a sequential fashion forming a multimeric L10(L12)X complex.

In terms of biological role, forms part of the ribosomal stalk, playing a central role in the interaction of the ribosome with GTP-bound translation factors. This is Large ribosomal subunit protein uL10 from Legionella pneumophila (strain Paris).